The primary structure comprises 255 residues: 5'-nucleotidase SurE (255 aa).

Residues D16, D17, S47, and N100 each contribute to the a divalent metal cation site.

This sequence belongs to the SurE nucleotidase family. It depends on a divalent metal cation as a cofactor.

Its subcellular location is the cytoplasm. The enzyme catalyses a ribonucleoside 5'-phosphate + H2O = a ribonucleoside + phosphate. In terms of biological role, nucleotidase that shows phosphatase activity on nucleoside 5'-monophosphates. In Vibrio vulnificus (strain CMCP6), this protein is 5'-nucleotidase SurE.